Consider the following 257-residue polypeptide: Zinc transporter ZupT (257 aa).

The next 8 helical transmembrane spans lie at 5 to 25 (LILTLLAGAATFIGAILGVIG), 32 to 52 (VLAFSLGFAAGIMLLISLMEM), 61 to 81 (GMSPVMGYGMFVVGLLGYFAL), 109 to 129 (AILLTLGISLHNFPEGVATYV), 137 to 157 (LGFGIALAVALHNIPEGLAVA), 171 to 191 (ILWAGISGLAEILGGVLTWLI), 195 to 215 (MISPVVMAAIMAAVAGIMVAL), and 236 to 256 (GVLCGMSVMGLSLVLLQTAGF). Positions 120 and 123 each coordinate Fe(2+). Residues glutamate 123 and histidine 148 each contribute to the Zn(2+) site. Asparagine 149, glutamate 152, and glutamate 181 together coordinate Fe(2+). Zn(2+) is bound at residue glutamate 152.

Belongs to the ZIP transporter (TC 2.A.5) family. ZupT subfamily.

It is found in the cell inner membrane. The catalysed reaction is Zn(2+)(in) = Zn(2+)(out). Mediates zinc uptake. May also transport other divalent cations. The polypeptide is Zinc transporter ZupT (Enterobacter sp. (strain 638)).